The chain runs to 282 residues: Energy-coupling factor transporter ATP-binding protein EcfA1 (282 aa).

An ABC transporter domain is found at 6–243 (ISFDHVTFTY…VEMLKRIGLD (238 aa)). An ATP-binding site is contributed by 40–47 (GHNGSGKS).

It belongs to the ABC transporter superfamily. Energy-coupling factor EcfA family. In terms of assembly, forms a stable energy-coupling factor (ECF) transporter complex composed of 2 membrane-embedded substrate-binding proteins (S component), 2 ATP-binding proteins (A component) and 2 transmembrane proteins (T component).

The protein localises to the cell membrane. ATP-binding (A) component of a common energy-coupling factor (ECF) ABC-transporter complex. Unlike classic ABC transporters this ECF transporter provides the energy necessary to transport a number of different substrates. The chain is Energy-coupling factor transporter ATP-binding protein EcfA1 from Lactobacillus delbrueckii subsp. bulgaricus (strain ATCC BAA-365 / Lb-18).